A 447-amino-acid chain; its full sequence is N-succinylarginine dihydrolase (447 aa).

Residues 19 to 28, Asn-110, and 137 to 138 contribute to the substrate site; these read AGLSFGNEAS and HR. Glu-174 is a catalytic residue. Residue Arg-212 coordinates substrate. The active site involves His-248. Residues Asp-250 and Asn-359 each contribute to the substrate site. Catalysis depends on Cys-365, which acts as the Nucleophile.

This sequence belongs to the succinylarginine dihydrolase family. As to quaternary structure, homodimer.

It catalyses the reaction N(2)-succinyl-L-arginine + 2 H2O + 2 H(+) = N(2)-succinyl-L-ornithine + 2 NH4(+) + CO2. The protein operates within amino-acid degradation; L-arginine degradation via AST pathway; L-glutamate and succinate from L-arginine: step 2/5. Its function is as follows. Catalyzes the hydrolysis of N(2)-succinylarginine into N(2)-succinylornithine, ammonia and CO(2). In Escherichia coli (strain SMS-3-5 / SECEC), this protein is N-succinylarginine dihydrolase.